Consider the following 905-residue polypeptide: Toll-like receptor 3 (905 aa).

Residues 1-25 form the signal peptide; that stretch reads MKGCSSYLMYSFGGLLSLWILLVSS. The 27-residue stretch at 26–52 folds into the LRRNT domain; it reads TNQCTVRYNVADCSHLKLTHIPDDLPS. Topologically, residues 26-705 are lumenal; the sequence is TNQCTVRYNV…SCKDSAPFEL (680 aa). Cysteine 29 and cysteine 38 form a disulfide bridge. 3 N-linked (GlcNAc...) asparagine glycosylation sites follow: asparagine 53, asparagine 58, and asparagine 71. LRR repeat units lie at residues 53–74, 77–98, 101–122, 125–146, 149–170, and 173–196; these read NITV…NFTR, QLAI…LCQI, LLKV…TFVF, NLTE…PFKN, NLIK…TGVQ, and NLQE…EFLG. A disulfide bridge links cysteine 96 with cysteine 123. N-linked (GlcNAc...) asparagine glycosylation is present at asparagine 125. Asparagine 197 is a glycosylation site (N-linked (GlcNAc...) asparagine). Residues 199–220 form an LRR 7 repeat; that stretch reads SLRKLDLSSNPLKEFSPGCFQT. N-linked (GlcNAc...) asparagine glycosylation is found at asparagine 248, asparagine 253, asparagine 276, and asparagine 292. 15 LRR repeats span residues 250 to 271, 276 to 297, 300 to 321, 324 to 345, 357 to 378, 381 to 401, 409 to 430, 433 to 454, 458 to 479, 482 to 502, 508 to 529, 532 to 553, 564 to 585, 588 to 609, and 612 to 633; these read SIQN…TFSG, NLTQ…SFSY, SLRY…SFYG, NLRY…ASHP, YLEY…TFTG, SLKY…TNET, PLLT…TFSW, QLRI…QEWR, NIFE…SFAL, SLQR…SPSP, NLTI…LLEG, NLEI…ANPG, HLHI…VFKN, ELKS…IFDD, and SLRS…VFGP. Residues asparagine 399, asparagine 414, and asparagine 425 are each glycosylated (N-linked (GlcNAc...) asparagine). Asparagine 508 carries N-linked (GlcNAc...) asparagine glycosylation. Positions 646-699 constitute an LRRCT domain; it reads NPFDCTCESISWFVNWINQTHTNISELSTHYLCNTPHHYYGFPLKLFDTSSCKD. 2 disulfide bridges follow: cysteine 650–cysteine 678 and cysteine 652–cysteine 697. 2 N-linked (GlcNAc...) asparagine glycosylation sites follow: asparagine 663 and asparagine 668. A helical membrane pass occupies residues 706-726; the sequence is LFIISTSMLLVFILVVLLIHI. Over 727-905 the chain is Cytoplasmic; that stretch reads EGWRISFYWN…VALGSRNSAH (179 aa). In terms of domain architecture, TIR spans 755–898; it reads FEYTAYIIHA…AFHHKLQVAL (144 aa). The residue at position 760 (tyrosine 760) is a Phosphotyrosine. Glycyl lysine isopeptide (Lys-Gly) (interchain with G-Cter in ubiquitin) cross-links involve residues lysine 766, lysine 813, and lysine 832. Tyrosine 859 is subject to Phosphotyrosine.

It belongs to the Toll-like receptor family. In terms of assembly, monomer and homodimer; dimerization is triggered by ligand-binding, the signaling unit is composed of one ds-RNA of around 40 bp and two TLR3 molecules, and lateral clustering of signaling units along the length of the ds-RNA ligand is required for TLR3 signal transduction. Interacts (via transmembrane domain) with UNC93B1; the interaction is required for transport from the ER to the endosomes. Interacts with SRC; upon binding of double-stranded RNA. Interacts with TICAM1 (via the TIR domain) in response to poly(I:C) and this interaction is enhanced in the presence of WDFY1. The tyrosine-phosphorylated form (via TIR domain) interacts with WDFY1 (via WD repeat 2) in response to poly(I:C). Ubiquitinated by RNF170 at Lys-766 via 'Lys-48'-linked ubiquitin chains; leading to TLR3 proteasomal degradation. TLR3 signaling requires a proteolytic cleavage mediated by cathepsins CTSB and CTSH, the cleavage occurs between amino acids 252 and 346. The cleaved form of TLR3 is the predominant form found in endosomes. In terms of processing, ubiquitinated by TRIM3; leading to recognition and sorting of polyubiquitinated TLR3 by the ESCRT complexes. Ubiquitinated by ZNRF1 via 'Lys-63'-linked ubiquitin chains; leading to TLR3 lysosomal trafficking and degradation. Highly expressed in lung. After intraperitoneal injection of lipopolysaccharide, highly expressed in brain, heart, kidney, liver, lung and spleen.

The protein resides in the endoplasmic reticulum membrane. It is found in the endosome membrane. The protein localises to the early endosome. In terms of biological role, key component of innate and adaptive immunity. TLRs (Toll-like receptors) control host immune response against pathogens through recognition of molecular patterns specific to microorganisms. TLR3 is a nucleotide-sensing TLR which is activated by double-stranded RNA, a sign of viral infection. Acts via the adapter TRIF/TICAM1, leading to NF-kappa-B activation, IRF3 nuclear translocation, cytokine secretion and the inflammatory response. The chain is Toll-like receptor 3 from Mus musculus (Mouse).